The chain runs to 175 residues: ATP synthase subunit b, chloroplastic (175 aa).

A helical membrane pass occupies residues 21-40 (LLESNVINIIILISLLIYLG).

It belongs to the ATPase B chain family. In terms of assembly, F-type ATPases have 2 components, F(1) - the catalytic core - and F(0) - the membrane proton channel. F(1) has five subunits: alpha(3), beta(3), gamma(1), delta(1), epsilon(1). F(0) has four main subunits: a(1), b(1), b'(1) and c(10-14). The alpha and beta chains form an alternating ring which encloses part of the gamma chain. F(1) is attached to F(0) by a central stalk formed by the gamma and epsilon chains, while a peripheral stalk is formed by the delta, b and b' chains.

It localises to the plastid. The protein resides in the chloroplast thylakoid membrane. In terms of biological role, f(1)F(0) ATP synthase produces ATP from ADP in the presence of a proton or sodium gradient. F-type ATPases consist of two structural domains, F(1) containing the extramembraneous catalytic core and F(0) containing the membrane proton channel, linked together by a central stalk and a peripheral stalk. During catalysis, ATP synthesis in the catalytic domain of F(1) is coupled via a rotary mechanism of the central stalk subunits to proton translocation. Component of the F(0) channel, it forms part of the peripheral stalk, linking F(1) to F(0). This chain is ATP synthase subunit b, chloroplastic, found in Cyanidium caldarium (Red alga).